The primary structure comprises 213 residues: Probable nicotinate-nucleotide adenylyltransferase (213 aa).

The protein belongs to the NadD family.

It carries out the reaction nicotinate beta-D-ribonucleotide + ATP + H(+) = deamido-NAD(+) + diphosphate. It functions in the pathway cofactor biosynthesis; NAD(+) biosynthesis; deamido-NAD(+) from nicotinate D-ribonucleotide: step 1/1. Its function is as follows. Catalyzes the reversible adenylation of nicotinate mononucleotide (NaMN) to nicotinic acid adenine dinucleotide (NaAD). This is Probable nicotinate-nucleotide adenylyltransferase from Escherichia coli O17:K52:H18 (strain UMN026 / ExPEC).